The following is a 189-amino-acid chain: UPF0301 protein RF_0044 (189 aa).

This sequence belongs to the UPF0301 (AlgH) family.

The protein is UPF0301 protein RF_0044 of Rickettsia felis (strain ATCC VR-1525 / URRWXCal2) (Rickettsia azadi).